The chain runs to 176 residues: Disulfide bond formation protein B (176 aa).

Topologically, residues 1 to 14 (MLRFLNQCSQGRGA) are cytoplasmic. A helical membrane pass occupies residues 15-31 (WLLMAFTALALELTALW). Residues 32–49 (FQHVMLLKPCVLCIYERC) lie on the Periplasmic side of the membrane. Cys41 and Cys44 are oxidised to a cystine. The chain crosses the membrane as a helical span at residues 50–65 (ALFGVLGAALIGAIAP). Over 66 to 71 (KTPLRY) the chain is Cytoplasmic. The helical transmembrane segment at 72–89 (VAMVIWLYSAFRGVQLTY) threads the bilayer. Residues 90–144 (EHTMLQLYPSPFATCDFMVRFPEWLPLDKWVPQVFVASGDCAERQWDFLGMEMPQ) are Periplasmic-facing. Cys104 and Cys130 form a disulfide bridge. A helical membrane pass occupies residues 145 to 163 (WLLGIFIAYLIVAVLVVIS). Residues 164–176 (QPFKAKKRDLFGR) lie on the Cytoplasmic side of the membrane.

It belongs to the DsbB family.

Its subcellular location is the cell inner membrane. Required for disulfide bond formation in some periplasmic proteins such as PhoA or OmpA. Acts by oxidizing the DsbA protein. This chain is Disulfide bond formation protein B, found in Shigella flexneri.